A 356-amino-acid polypeptide reads, in one-letter code: Nicotinate-nucleotide--dimethylbenzimidazole phosphoribosyltransferase (356 aa).

The active-site Proton acceptor is Glu-317.

The protein belongs to the CobT family. In terms of assembly, homodimer.

The catalysed reaction is 5,6-dimethylbenzimidazole + nicotinate beta-D-ribonucleotide = alpha-ribazole 5'-phosphate + nicotinate + H(+). Its pathway is nucleoside biosynthesis; alpha-ribazole biosynthesis; alpha-ribazole from 5,6-dimethylbenzimidazole: step 1/2. In terms of biological role, catalyzes the synthesis of alpha-ribazole-5'-phosphate from nicotinate mononucleotide (NAMN) and 5,6-dimethylbenzimidazole (DMB). The protein is Nicotinate-nucleotide--dimethylbenzimidazole phosphoribosyltransferase of Salmonella agona (strain SL483).